A 252-amino-acid polypeptide reads, in one-letter code: Probable anguibactin biosynthesis thioesterase AngT (252 aa).

Catalysis depends on residues serine 92 and histidine 229.

Belongs to the thioesterase family.

Its pathway is siderophore biosynthesis; anguibactin biosynthesis. Functionally, probable thioesterase. Involved in anguibactin production, but is not essential for virulence or iron transport gene expression. This is Probable anguibactin biosynthesis thioesterase AngT (angT) from Vibrio anguillarum (strain ATCC 68554 / 775) (Listonella anguillarum).